We begin with the raw amino-acid sequence, 505 residues long: Deoxyguanosinetriphosphate triphosphohydrolase (505 aa).

The HD domain occupies 66 to 273 (RLTHSMEVQQ…MEAADDISYC (208 aa)).

It belongs to the dGTPase family. Type 1 subfamily. In terms of assembly, homotetramer. Mg(2+) serves as cofactor.

It catalyses the reaction dGTP + H2O = 2'-deoxyguanosine + triphosphate + H(+). Inhibited by the action of reducing agents such as dithiothreitol and 2-mercaptoethanol. Functionally, dGTPase preferentially hydrolyzes dGTP over the other canonical NTPs. The polypeptide is Deoxyguanosinetriphosphate triphosphohydrolase (Shigella boydii).